Consider the following 113-residue polypeptide: Large ribosomal subunit protein eL30 (113 aa).

It belongs to the eukaryotic ribosomal protein eL30 family.

The chain is Large ribosomal subunit protein eL30 (RpL30) from Spodoptera frugiperda (Fall armyworm).